We begin with the raw amino-acid sequence, 494 residues long: Protein translocase subunit SecD (494 aa).

Transmembrane regions (helical) follow at residues 7–27 (WFAL…NLPF), 322–342 (LIAA…FYRL), 345–365 (FIAI…YALI), 372–392 (PGVA…VLIF), 420–440 (IIDG…LGTG), and 441–461 (FVKG…FTAL).

The protein belongs to the SecD/SecF family. SecD subfamily. Forms a complex with SecF. Part of the essential Sec protein translocation apparatus which comprises SecA, SecYEG and auxiliary proteins SecDF. Other proteins may also be involved.

It localises to the cell inner membrane. Part of the Sec protein translocase complex. Interacts with the SecYEG preprotein conducting channel. SecDF uses the proton motive force (PMF) to complete protein translocation after the ATP-dependent function of SecA. Functionally, probably participates in protein translocation into and across both the cytoplasmic and thylakoid membranes in cyanobacterial cells. The protein is Protein translocase subunit SecD of Prochlorococcus marinus (strain SARG / CCMP1375 / SS120).